A 120-amino-acid polypeptide reads, in one-letter code: Succinate dehydrogenase assembly factor 3, mitochondrial (120 aa).

Residues Met-1 to Leu-36 constitute a mitochondrion transit peptide.

The protein belongs to the complex I LYR family. SDHAF3 subfamily. Interacts with SdhB within an SdhA-SdhB subcomplex.

It is found in the mitochondrion matrix. Functionally, plays an essential role in the assembly of succinate dehydrogenase (SDH), an enzyme complex (also referred to as respiratory complex II) that is a component of both the tricarboxylic acid (TCA) cycle and the mitochondrial electron transport chain, and which couples the oxidation of succinate to fumarate with the reduction of ubiquinone (coenzyme Q) to ubiquinol. Promotes maturation of the iron-sulfur protein subunit SdhB of the SDH catalytic dimer, protecting it from the deleterious effects of oxidants. The chain is Succinate dehydrogenase assembly factor 3, mitochondrial from Drosophila melanogaster (Fruit fly).